A 434-amino-acid chain; its full sequence is Monodehydroascorbate reductase 1, peroxisomal (434 aa).

FAD is bound by residues 13–16 (GGVS), E40, R47, K52, I95, and 146–147 (RE). NAD(+)-binding positions include 171 to 177 (GGYIGLE), E195, R201, and G260. Position 173–177 (173–177 (YIGLE)) interacts with NADP(+). 2 residues coordinate NADP(+): R201 and G260. D297 serves as a coordination point for FAD. 313–314 (EH) is an NAD(+) binding site. Residue 313-314 (EH) coordinates NADP(+). V315 lines the FAD pocket. R319 contributes to the L-ascorbate binding site. FAD is bound at residue Y348. NAD(+) is bound at residue Y348. Residue Y348 participates in NADP(+) binding. An L-ascorbate-binding site is contributed by R350. S416 bears the Phosphoserine mark.

This sequence belongs to the FAD-dependent oxidoreductase family. FAD is required as a cofactor.

The protein resides in the peroxisome matrix. It catalyses the reaction 2 monodehydro-L-ascorbate radical + NADH + H(+) = 2 L-ascorbate + NAD(+). In terms of biological role, catalyzes the conversion of monodehydroascorbate to ascorbate, oxidizing NADH in the process. The protein is Monodehydroascorbate reductase 1, peroxisomal of Arabidopsis thaliana (Mouse-ear cress).